Consider the following 86-residue polypeptide: UPF0367 protein NATL1_01981 (86 aa).

The protein belongs to the UPF0367 family.

The polypeptide is UPF0367 protein NATL1_01981 (Prochlorococcus marinus (strain NATL1A)).